The following is a 387-amino-acid chain: Oleoyl-12-hydroxylase FAH12 (387 aa).

The segment at 1 to 34 (MGGGGRMSTVITSNNSEKKGGSSHLKRAPHTKPP) is disordered. 2 consecutive transmembrane segments (helical) span residues 61 to 81 (AYDV…FPYI) and 88 to 108 (VAWL…WVIG). The short motif at 109 to 113 (HECGH) is the Histidine box-1 element. A helical transmembrane segment spans residues 121–141 (LADDIVGLIVHSALLVPYFSW). Positions 145–149 (HRRHH) match the Histidine box-2 motif. 3 helical membrane passes run 183–203 (VLTL…FNVS), 229–249 (IYIA…ATMA), and 253–273 (AWVM…LVMI). The short motif at 319-323 (HVAHH) is the Histidine box-3 element.

It belongs to the fatty acid desaturase type 1 family. As to expression, expressed in seeds. Barely detected in leaves.

Its subcellular location is the microsome membrane. The catalysed reaction is a 1-acyl-2-(9Z)-octadecenoyl-sn-glycero-3-phosphocholine + 2 Fe(II)-[cytochrome b5] + O2 + 2 H(+) = a 1-acyl-2-[(R)-12-hydroxyoleoyl]-sn-glycero-3-phosphocholine + 2 Fe(III)-[cytochrome b5] + H2O. It functions in the pathway lipid metabolism; monounsaturated fatty acid biosynthesis. Inhibited by oleoyloxyethyl phosphocholine. Its function is as follows. Oleoyl-12-hydroxylase involved in the biosynthesis of ricinoleate (12-hydroxy-cis-9-octadecenoate), the major fatty acid constituent of the oil seeds from castor bean plants. Catalyzes the hydroxylation at the 12-position of 1-acyl-2-oleoyl-sn-glycero-3-phosphocholine (2-oleoyl-PC), which seems to be the actual physiological subtrate. It uses cytochrome b5 as an electron donor. May also be involved in the production of lesquerolic acid (14-hydroxyeicos-cis-ll-enoic acid) in vitro. The sequence is that of Oleoyl-12-hydroxylase FAH12 from Ricinus communis (Castor bean).